Consider the following 80-residue polypeptide: MAVKKPENLTFEAAIEELDSVVNQLESGDLPLEDALKKFERGISLARAGQEKLTQAEQRVDILLQADDNAELTPFDANDD.

Belongs to the XseB family. As to quaternary structure, heterooligomer composed of large and small subunits.

The protein localises to the cytoplasm. It carries out the reaction Exonucleolytic cleavage in either 5'- to 3'- or 3'- to 5'-direction to yield nucleoside 5'-phosphates.. Its function is as follows. Bidirectionally degrades single-stranded DNA into large acid-insoluble oligonucleotides, which are then degraded further into small acid-soluble oligonucleotides. The polypeptide is Exodeoxyribonuclease 7 small subunit (Aliivibrio salmonicida (strain LFI1238) (Vibrio salmonicida (strain LFI1238))).